A 205-amino-acid polypeptide reads, in one-letter code: MSGFENDISIGATMTQSQTSQGFSLQMFGKPTIVLAHLSFKGAALFFYFFANFFTNSFIVQFLVILTLLSMDFWTVKNITGRLLVGLRWWNFVDADGNNHWKFESAKDMTRFATIDRRVFWLGLVVGPAAWIFFVVTAFLTLKFEWMIVALLGALMNMANLWGYLRCRWNNTEQMTSYFQKWAFLNVLRRAQQPPQEYQNPVFSA.

Helical transmembrane passes span 45–65 (LFFYFFANFFTNSFIVQFLVI), 119–139 (VFWLGLVVGPAAWIFFVVTAF), and 144–164 (FEWMIVALLGALMNMANLWGY).

The protein belongs to the TVP23 family.

The protein resides in the membrane. This is an uncharacterized protein from Caenorhabditis elegans.